The sequence spans 119 residues: Large ribosomal subunit protein uL24 (119 aa).

Belongs to the universal ribosomal protein uL24 family. As to quaternary structure, part of the 50S ribosomal subunit.

Functionally, one of two assembly initiator proteins, it binds directly to the 5'-end of the 23S rRNA, where it nucleates assembly of the 50S subunit. Its function is as follows. One of the proteins that surrounds the polypeptide exit tunnel on the outside of the subunit. This is Large ribosomal subunit protein uL24 from Clavibacter michiganensis subsp. michiganensis (strain NCPPB 382).